We begin with the raw amino-acid sequence, 146 residues long: uncharacterized protein (146 aa).

Belongs to the BlaI transcriptional regulatory family.

This is an uncharacterized protein from Latilactobacillus sakei (Lactobacillus sakei).